A 451-amino-acid polypeptide reads, in one-letter code: ACT domain-containing protein ACR4 (451 aa).

4 consecutive ACT domains span residues 35–118, 123–200, 259–335, and 337–416; these read VIRV…VIPS, VIEL…NTPR, VVTV…VSEG, and KLEL…QEQQ. Residues 409-428 form a disordered region; the sequence is KNNPQEQQQRQKSPSHESPT. Over residues 410-420 the composition is skewed to polar residues; it reads NNPQEQQQRQK.

As to expression, highly expressed in flowers and at lower levels in leaves and siliques.

In terms of biological role, may bind amino acids. The sequence is that of ACT domain-containing protein ACR4 from Arabidopsis thaliana (Mouse-ear cress).